We begin with the raw amino-acid sequence, 147 residues long: Protein-export protein SecB 2 (147 aa).

Belongs to the SecB family. In terms of assembly, homotetramer, a dimer of dimers. One homotetramer interacts with 1 SecA dimer.

The protein resides in the cytoplasm. One of the proteins required for the normal export of preproteins out of the cell cytoplasm. It is a molecular chaperone that binds to a subset of precursor proteins, maintaining them in a translocation-competent state. It also specifically binds to its receptor SecA. This chain is Protein-export protein SecB 2, found in Francisella tularensis subsp. novicida (strain U112).